Consider the following 307-residue polypeptide: Salivary glue protein Sgs-3 (307 aa).

Positions 1–23 (MKLTIATALASILLIGSANVANC) are cleaved as a signal peptide. The disordered stretch occupies residues 56–257 (APPTQQSTTQ…PTTTKPTTPK (202 aa)).

O-glycosylated by Pgnat9 in salivary glands. As to expression, specifically expressed in the salivary gland.

The protein localises to the secreted. This is Salivary glue protein Sgs-3 from Drosophila melanogaster (Fruit fly).